Consider the following 742-residue polypeptide: Ion-translocating oxidoreductase complex subunit C (742 aa).

4Fe-4S ferredoxin-type domains follow at residues 369–397 and 407–436; these read GEPQEEQSCIRCSACADACPADLLPQQLY and KATTHNIADCIECGACAWVCPSNIPLVQYF. Residues Cys-377, Cys-380, Cys-383, Cys-387, Cys-416, Cys-419, Cys-422, and Cys-426 each coordinate [4Fe-4S] cluster. Residues 602 to 719 form a disordered region; that stretch reads KLEQQQANAE…PEEQVDPRKA (118 aa).

This sequence belongs to the 4Fe4S bacterial-type ferredoxin family. RnfC subfamily. The complex is composed of six subunits: RsxA, RsxB, RsxC, RsxD, RsxE and RsxG. The cofactor is [4Fe-4S] cluster.

It is found in the cell inner membrane. Part of a membrane-bound complex that couples electron transfer with translocation of ions across the membrane. Required to maintain the reduced state of SoxR. The chain is Ion-translocating oxidoreductase complex subunit C from Escherichia coli O6:H1 (strain CFT073 / ATCC 700928 / UPEC).